A 217-amino-acid chain; its full sequence is Salivary glue protein Sgs-3 (217 aa).

Residues 1 to 23 (MKLTIATVLASILLIGFANVANC) form the signal peptide. A compositionally biased stretch (low complexity) spans 45-130 (KSTSTTTTTT…KPTTHSTPKT (86 aa)). The disordered stretch occupies residues 45 to 163 (KSTSTTTTTT…KHTTPTTTTT (119 aa)). The segment covering 131–154 (KPTKHTTPKTKPTKHTTPKTKPTK) has biased composition (basic residues).

The sequence is that of Salivary glue protein Sgs-3 (Sgs3) from Drosophila simulans (Fruit fly).